A 375-amino-acid polypeptide reads, in one-letter code: MAKVAVWKPSILVLPRGLARWEVREAYVLAETAGYRVVDVLYYRRVSSSKLLSDAKLEELAEKAKSLVGNEYARIIVYDNLKPREYFRIVKATGVNTIDRTMLILEIFSLHAGSREAKLQIELARLRHELPLVREAIRLSKLKELPGFLGPGGYAIDAYYRYMVSRIAKIKRELRELRRRHEIERSKRRSAGLPHIAIVGYASAGKTSLFNAITGLQKPVGPEYFTTITPKRRAISFNGLRTVFIDTVGFIMRIPPEIIEAFHSTLEEAATADVILYVVDVSEPDTVIAEKLDEGLQTLRRIGVIDKPLIIAANKIDLVPQEDIERLTRLLEGAASTLYPALEAVIPVSAKTGAGVAKLLCRIATLLAGTKGSTC.

Residues 194 to 371 (PHIAIVGYAS…RIATLLAGTK (178 aa)) form the Hflx-type G domain. GTP is bound by residues 200 to 207 (GYASAGKT), 225 to 229 (FTTIT), 246 to 249 (DTVG), 314 to 317 (NKID), and 349 to 351 (SAK). Residues T207 and T227 each contribute to the Mg(2+) site.

It belongs to the TRAFAC class OBG-HflX-like GTPase superfamily. HflX GTPase family. As to quaternary structure, monomer. Associates with the 50S ribosomal subunit. The cofactor is Mg(2+).

The protein localises to the cytoplasm. Functionally, GTPase that associates with the 50S ribosomal subunit and may have a role during protein synthesis or ribosome biogenesis. The sequence is that of GTPase HflX from Hyperthermus butylicus (strain DSM 5456 / JCM 9403 / PLM1-5).